Reading from the N-terminus, the 145-residue chain is MDVQIFPHRLLGADTTEKLLNRLEDIHGVKRMVIHGQRLPPEDHPDRRIINVKGQEFELQVKTGRVLLEVEDEETITDIKRVCEDLLPFGYDVTPGKYIRTEKTVTDEIKYGESLDEIPDELIGLTDQNARLSERATIIKRKKEH.

In terms of assembly, MCR is composed of three subunits: alpha, beta, and gamma. The function of proteins C and D is not known.

In Methanothermobacter marburgensis (strain ATCC BAA-927 / DSM 2133 / JCM 14651 / NBRC 100331 / OCM 82 / Marburg) (Methanobacterium thermoautotrophicum), this protein is Methyl-coenzyme M reductase I operon protein D (mcrD).